Reading from the N-terminus, the 569-residue chain is MDSSTATAMTAPFIDPTDHVNLKTDTDASENRRMGNYKPSIWNYDFLQSLATHHNIVEERHLKLAEKLKGQVKFMFGAPMEPLAKLELVDVVQRLGLNHRFETEIKEALFSIYKDESNGWWFGHLHATSLRFRLLRQCGLFIPQDVFKTFQNKTGEFDMKLCDNVKGLLSLYEASYLGWKGENILDEAKAFATKYLKSAWENISEKWLAKRVKHALALPLHWRVPRIEARWFIEAYEQEANMNPTLLKLAKLDFNMVQSIHQKEIGELARWWVTTGLDKLAFARNNLLQSYMWSCAIASDPKFKLARETIVEIGSVLTVVDDAYDVYGSMDELDLYTSSVERWSCVEIDKLPNTLKLIFMSMFNKTNEVGLRVQHERGYNSIPTFIKAWVQQCKSYQKEARWFHGGHTPPLEEYSLNGLVSIGFPLLLITGYVAIAENEAALDKVHPLPDLLHYSSLLSRLINDIGTSPDEMARGDNLKSIHCYMNGTGASEEVAREHIKGVIEENWKILNQCCFDQSQFQEPFITFNLNSVRGSHFFYEFGDGFGVTDSWTKVDMKSVLIDPIPLGEE.

Positions 284, 321, 325, and 460 each coordinate (2E)-geranyl diphosphate. Mg(2+) is bound by residues Asp-321 and Asp-325. Residues 321–325 (DDAYD) carry the DDXXD motif motif. Mg(2+)-binding residues include Asn-463, Thr-467, and Glu-471.

It belongs to the terpene synthase family. Tpsb subfamily. Mg(2+) serves as cofactor. The cofactor is Mn(2+).

It carries out the reaction (2E,6E)-farnesyl diphosphate = (1S,5S,6R)-alpha-bergamotene + diphosphate. The enzyme catalyses (2E,6E)-farnesyl diphosphate = (+)-alpha-santalene + diphosphate. It catalyses the reaction (2E,6E)-farnesyl diphosphate = (-)-beta-santalene + diphosphate. In terms of biological role, catalyzes a mixture of sesquiterpenoids from (2E,6E)-farnesyl diphosphate in fragrance biosynthesis. Catalyzes the formation of alpha-santalene, beta-santalene, epi-beta-santalene and exo-alpha-bergamotene, as well as traces of alpha-farnesene and beta-farnesene. This chain is Santalene synthase, found in Santalum austrocaledonicum (Sandalwood).